The following is a 201-amino-acid chain: Adenylyl-sulfate kinase (201 aa).

35–42 is a binding site for ATP; sequence GLSGSGKS. The active-site Phosphoserine intermediate is serine 109.

It belongs to the APS kinase family.

It carries out the reaction adenosine 5'-phosphosulfate + ATP = 3'-phosphoadenylyl sulfate + ADP + H(+). The protein operates within sulfur metabolism; hydrogen sulfide biosynthesis; sulfite from sulfate: step 2/3. Functionally, catalyzes the synthesis of activated sulfate. This chain is Adenylyl-sulfate kinase, found in Bacteroides thetaiotaomicron (strain ATCC 29148 / DSM 2079 / JCM 5827 / CCUG 10774 / NCTC 10582 / VPI-5482 / E50).